Here is a 1530-residue protein sequence, read N- to C-terminus: Neurexin-1 (1530 aa).

The N-terminal stretch at 1-30 (MGTALLQRGGCFLLCLSLLLLGCWAELGSG) is a signal peptide. The 182-residue stretch at 31–212 (LEFPGAEGQW…KLDDEPPNSG (182 aa)) folds into the Laminin G-like 1 domain. At 31 to 1454 (LEFPGAEGQW…EVIRESSSTT (1424 aa)) the chain is on the extracellular side. Residues Asn125 and Asn190 are each glycosylated (N-linked (GlcNAc...) asparagine). The disordered stretch occupies residues 199 to 221 (SGEVKLDDEPPNSGGGSPCEAGE). Residues 213 to 256 (GGSPCEAGEEGEGGVCLNGGVCSVVDDQAVCDCSRTGFRGKDCS) enclose the EGF-like 1 domain. 2 disulfides stabilise this stretch: Cys228/Cys243 and Cys245/Cys255. Laminin G-like domains follow at residues 299–496 (IATF…AFKC) and 503–695 (DPIT…KPSC). Ca(2+) is bound by residues Asp345, Leu362, and Met430. Intrachain disulfides connect Cys460–Cys496, Cys666–Cys695, Cys703–Cys714, Cys708–Cys723, and Cys725–Cys735. One can recognise an EGF-like 2 domain in the interval 699 to 736 (TAKPCLSNPCKNNGMCRDGWNRYVCDCSGTGYLGRSCE). O-linked (Glc...) serine glycosylation occurs at Ser705. Laminin G-like domains are found at residues 741 to 914 (VLSY…IDYC) and 928 to 1103 (DPVT…ERGC). Ca(2+) is bound by residues Asp788 and Leu805. N-linked (GlcNAc...) asparagine glycosylation is present at Asn813. Arg864 is a Ca(2+) binding site. 5 disulfide bridges follow: Cys906–Cys914, Cys1075–Cys1103, Cys1110–Cys1121, Cys1115–Cys1130, and Cys1132–Cys1142. The EGF-like 3 domain maps to 1106–1143 (PSTTCQEDSCSNQGVCLQQWDGISCDCSMTSFSGPLCN). The Laminin G-like 6 domain maps to 1149 to 1347 (YIFSKGGGQI…DANIAIVGNV (199 aa)). The Ca(2+) site is built by Asp1199 and Val1216. N-linked (GlcNAc...) asparagine glycosylation occurs at Asn1246. Ca(2+) contacts are provided by Ile1298 and Asn1300. O-linked (Xyl...) (heparan sulfate) serine glycosylation is present at Ser1408. The disordered stretch occupies residues 1411–1443 (CPSDDEDIDPCEPSSGGLANPTRAGGREPYPGS). A helical transmembrane segment spans residues 1455–1475 (GMVVGIVAAAALCILILLYAM). Residues 1476–1530 (YKYRNRDEGSYHVDESRNYISNSAQSNGAVVKEKQPSSAKSANKNKKNKDKEYYV) lie on the Cytoplasmic side of the membrane. Residues 1497-1523 (NSAQSNGAVVKEKQPSSAKSANKNKKN) are interaction with CASK. The segment at 1497-1530 (NSAQSNGAVVKEKQPSSAKSANKNKKNKDKEYYV) is disordered.

The protein belongs to the neurexin family. As to quaternary structure, interacts (via laminin G-like domain 2 and/or laminin G-like domain 6) with NLGN1 forming a heterotetramer, where one NLGN1 dimer interacts with one NRXN1 dimer. Also interacts (via laminin G-like domain 2 and/or laminin G-like domain 6) with NLGN2, NLGN3 and NLGN4L; interactions with NLGN1, NLGN2, NLGN3 and NLGN4L are calcium-dependent. Interacts (via cytoplasmic C-terminal region) with CASK (via the PDZ, SH3 and guanylate kinase-like domains). Interacts (via cytoplasmic C-terminus) with CASKIN1 and APBA1. Interacts (via laminin G-like domain 2) with NXPH1 and NXPH3. Alpha-type isoforms (neurexin-1-alpha) interact (via laminin G-like domain 2 and/or laminin G-like domain 6) with DAG1 (via alpha-dystroglycan chain). Interacts with LRRTM1, LRRTM2, LRRTM3 and LRRTM4. Interacts with SYT13 and SYTL1. Interacts with CBLN1, CBLN2 and, less avidly, with CBLN4. Interacts with CLSTN3. Alpha-type isoforms interact with alpha-latrotoxin from spider venom. O-glycosylated; contains heparan sulfate. Heparan sulfate attachment is required for synapse development by mediating interactions with neuroligins and LRRTM2.

Its subcellular location is the presynaptic cell membrane. Functionally, cell surface protein involved in cell-cell-interactions, exocytosis of secretory granules and regulation of signal transmission. Function is isoform-specific. Alpha-type isoforms have a long N-terminus with six laminin G-like domains and play an important role in synaptic signal transmission. Alpha-type isoforms play a role in the regulation of calcium channel activity and Ca(2+)-triggered neurotransmitter release at synapses and at neuromuscular junctions. They play an important role in Ca(2+)-triggered exocytosis of secretory granules in pituitary gland. They may affect their functions at synapses and in endocrine cells via their interactions with proteins from the exocytotic machinery. Likewise, alpha-type isoforms play a role in regulating the activity of postsynaptic NMDA receptors, a subtype of glutamate-gated ion channels. Both alpha-type and beta-type isoforms may play a role in the formation or maintenance of synaptic junctions via their interactions (via the extracellular domains) with neuroligin family members, CBLN1 or CBLN2. In vitro, triggers the de novo formation of presynaptic structures. May be involved in specification of excitatory synapses. Alpha-type isoforms were first identified as receptors for alpha-latrotoxin from spider venom. This is Neurexin-1 (NRXN1) from Bos taurus (Bovine).